The sequence spans 160 residues: MATVYLGLGSNVGDRISYILKAIEKLEEFLEIEKISTVYESKAWGFENQGNFLNFVLKAKTSLLPQELLLKIKKVEKEVGRKERFKWGPREIDIDILLYKDEVIRTKLLKVPHPFLEKRDFFVYPLLEIEPNVIHPIYRKPLKEFKPENTLKPFCCILKV.

Belongs to the HPPK family.

The enzyme catalyses 6-hydroxymethyl-7,8-dihydropterin + ATP = (7,8-dihydropterin-6-yl)methyl diphosphate + AMP + H(+). It participates in cofactor biosynthesis; tetrahydrofolate biosynthesis; 2-amino-4-hydroxy-6-hydroxymethyl-7,8-dihydropteridine diphosphate from 7,8-dihydroneopterin triphosphate: step 4/4. Catalyzes the transfer of pyrophosphate from adenosine triphosphate (ATP) to 6-hydroxymethyl-7,8-dihydropterin, an enzymatic step in folate biosynthesis pathway. This is 2-amino-4-hydroxy-6-hydroxymethyldihydropteridine pyrophosphokinase (folK) from Aquifex aeolicus (strain VF5).